Consider the following 111-residue polypeptide: Cell division protein FtsB (111 aa).

The Cytoplasmic portion of the chain corresponds to 1–3; that stretch reads MRL. Residues 4–21 traverse the membrane as a helical segment; that stretch reads LFLVLLVLLGLIQYPLWL. The Periplasmic portion of the chain corresponds to 22 to 111; it reads GKGGWFKVWD…PGQTASAPRR (90 aa). Residues 31–62 adopt a coiled-coil conformation; the sequence is DLQRQVAAQHETNDGLRARNAALEAEVRDLAT. The disordered stretch occupies residues 88–111; the sequence is VPPGTPVPQPAPGAPGQTASAPRR. Over residues 90-100 the composition is skewed to pro residues; it reads PGTPVPQPAPG. The segment covering 101–111 has biased composition (low complexity); it reads APGQTASAPRR.

The protein belongs to the FtsB family. As to quaternary structure, part of a complex composed of FtsB, FtsL and FtsQ.

It is found in the cell inner membrane. Essential cell division protein. May link together the upstream cell division proteins, which are predominantly cytoplasmic, with the downstream cell division proteins, which are predominantly periplasmic. This Bordetella petrii (strain ATCC BAA-461 / DSM 12804 / CCUG 43448) protein is Cell division protein FtsB.